Consider the following 1706-residue polypeptide: DDT domain-containing protein PTM (1706 aa).

Residues Met1 to Gln16 show a composition bias toward basic residues. 2 disordered regions span residues Met1 to Asn27 and Val144 to Asp168. A Nuclear localization signal motif is present at residues Arg9–Leu18. The span at Glu148–Glu160 shows a compositional bias: acidic residues. The 61-residue stretch at Glu192 to Arg252 folds into the DDT domain. A compositionally biased stretch (basic and acidic residues) spans Tyr375 to Ser393. The tract at residues Tyr375–Asp408 is disordered. Polar residues predominate over residues Arg394–Asp408. The PHD-type 1 zinc-finger motif lies at Ser411–Asn458. Disordered stretches follow at residues Lys1165–Lys1194 and Thr1311–Pro1345. Composition is skewed to polar residues over residues Pro1167–Lys1194 and Thr1311–Asp1323. Basic and acidic residues predominate over residues Asp1325–Lys1336. A run of 5 helical transmembrane segments spans residues Ala1539 to Pro1559, Leu1569 to Leu1589, Ala1596 to Ile1616, Ala1624 to Leu1644, and Met1682 to Ile1702.

In terms of assembly, interacts (via the DDT domain) with CHR11 (via C-terminus).

The protein resides in the plastid. Its subcellular location is the chloroplast outer membrane. It localises to the nucleus. In terms of biological role, membrane-bound transcription factor required for the plastid-to-nucleus retrograde signaling. Functions in multiple retrograde pathways. The plastid-to-nucleus signal plays an important role in the coordinated expression of both nuclear- and chloroplast-localized genes that encode photosynthesis-related proteins. In the nucleus, activates ABI4 transcription in a PHD-dependent manner associated with histone modifications. Localized primarily in the chloroplast outer membrane as dormant form and, in response to retrograde signals, is released from the membrane through proteolytic cleavage and its cleaved fragment containing the transcription factor domain is redistributed to the nucleus, where it regulates the expression of particular nuclear genes. This is DDT domain-containing protein PTM from Arabidopsis thaliana (Mouse-ear cress).